The chain runs to 419 residues: Gustatory receptor for sugar taste 64c (419 aa).

Over 1 to 15 (MQQSGQKGTRNTLQH) the chain is Cytoplasmic. Residues 16 to 36 (AIGPVLVIAQFFGVLPVAGVW) form a helical membrane-spanning segment. Topologically, residues 37 to 48 (PSCRPERVRFRW) are extracellular. The chain crosses the membrane as a helical span at residues 49–69 (ISLSLLAALILFVFSIVDCAL). Residues 70 to 82 (SSKVVFDHGLKIY) lie on the Cytoplasmic side of the membrane. Residues 83-103 (TIGSLSFSVICIFCFGVFLLL) form a helical membrane-spanning segment. Residues 104–139 (SRRWPYIIRRTAECEQIFLEPEYDCSYGRGYSSRLR) lie on the Extracellular side of the membrane. Residues 140 to 160 (LWGVCMLVAALCEHSTYVGSA) traverse the membrane as a helical segment. At 161–204 (LYNNHLAIVECKLDANFWQNYFQRERQQLFLIMHFTAWWIPFIE) the chain is on the cytoplasmic side. The helical transmembrane segment at 205-225 (WTTLSMTFVWNFVDIFLILIC) threads the bilayer. Topologically, residues 226-305 (RGMQMRFQQM…FQSKGNYADE (80 aa)) are extracellular. The chain crosses the membrane as a helical span at residues 306–326 (LYFWFCLSYVIIRVLNMMFAA). Residues 327–377 (SSIPQEAKEISYTLYEIPTEFWCVELRRLNEIFLSDHFALSGKGYFLLTRR) lie on the Cytoplasmic side of the membrane. The helical transmembrane segment at 378–398 (LIFAMAATLMVYELVLINQMA) threads the bilayer. Over 399–419 (GSEVQKSFCEGGVGSSKSIFS) the chain is Extracellular.

Belongs to the insect chemoreceptor superfamily. Gustatory receptor (GR) family. Gr5a subfamily. Expressed in Gr5a-expressing sugar-sensing cells.

The protein resides in the cell membrane. In terms of biological role, one of the few identified sugar gustatory receptors identified so far and which promotes the starvation-induced increase of feeding motivation. The sequence is that of Gustatory receptor for sugar taste 64c (Gr64c) from Drosophila melanogaster (Fruit fly).